The chain runs to 553 residues: MPTETEYDPSLGSKFVFVTGGVMSGLGKGITAASLGRLLSNAGFDVTAVKIDPYLNVDAGTMNPYQHGEVYVLDDGGEVDLDLGNYERFLDEDMTSDHNVTTGKVYQDVIERERSGDYLGKTVQIIPHVTDDIKRRVREAAEGSDVCLVEVGGTVGDIEGMPFLEALRQFSHEQDDEDILFTHVTLVPYSKNGEQKTKPTQHSVKELRSIGLQPDILVGRCEDRLDPDVREKIALFCDVPMDAVFSNPDVEDIYHVPLTVEEEGLDQYVMEQFDMVEDALPAAQRSTEWRDLVTRERTGEVDIALVGKYALEDAYMSIHEALKHASLEAGVEVNVLWVDSEKMHDHHERRIADADGIVVAGGFGSRGTAGKIDAIQHAREHDVPFLGLCLGFQLAVVEYARNVLGMTGAHSAEIDEDTEYPVIDLLPEQYDLEDLGGTMRLGAHETAIEPGTLAHDLYGATSCTERHRHRYEVNPEYIDDLTADGLTFSGEAGNRMEIVEHDDHPFFFGTQFHPEYRSRPTRASPPFVGLLDAVLERADVAPAGSDADVEVTN.

Residues 1 to 275 (MPTETEYDPS…DQYVMEQFDM (275 aa)) form an amidoligase domain region. Residue S24 coordinates CTP. S24 contributes to the UTP binding site. 25 to 30 (GLGKGI) is a binding site for ATP. Y65 is a binding site for L-glutamine. Residue D82 coordinates ATP. Mg(2+) is bound by residues D82 and E150. CTP contacts are provided by residues 157–159 (DIE), 196–201 (KTKPTQ), and K232. Residues 196 to 201 (KTKPTQ) and K232 contribute to the UTP site. The region spanning 308 to 540 (KYALEDAYMS…LDAVLERADV (233 aa)) is the Glutamine amidotransferase type-1 domain. Residue G362 coordinates L-glutamine. Catalysis depends on C389, which acts as the Nucleophile; for glutamine hydrolysis. L-glutamine contacts are provided by residues 390 to 393 (LGFQ), E413, and R470. Residues H513 and E515 contribute to the active site.

It belongs to the CTP synthase family. As to quaternary structure, homotetramer.

The enzyme catalyses UTP + L-glutamine + ATP + H2O = CTP + L-glutamate + ADP + phosphate + 2 H(+). It catalyses the reaction L-glutamine + H2O = L-glutamate + NH4(+). The catalysed reaction is UTP + NH4(+) + ATP = CTP + ADP + phosphate + 2 H(+). The protein operates within pyrimidine metabolism; CTP biosynthesis via de novo pathway; CTP from UDP: step 2/2. Allosterically activated by GTP, when glutamine is the substrate; GTP has no effect on the reaction when ammonia is the substrate. The allosteric effector GTP functions by stabilizing the protein conformation that binds the tetrahedral intermediate(s) formed during glutamine hydrolysis. Inhibited by the product CTP, via allosteric rather than competitive inhibition. Its function is as follows. Catalyzes the ATP-dependent amination of UTP to CTP with either L-glutamine or ammonia as the source of nitrogen. Regulates intracellular CTP levels through interactions with the four ribonucleotide triphosphates. The sequence is that of CTP synthase from Halobacterium salinarum (strain ATCC 29341 / DSM 671 / R1).